Here is a 484-residue protein sequence, read N- to C-terminus: Glutamyl-tRNA(Gln) amidotransferase subunit A (484 aa).

Catalysis depends on charge relay system residues Lys-78 and Ser-153. The active-site Acyl-ester intermediate is Ser-177.

Belongs to the amidase family. GatA subfamily. As to quaternary structure, heterotrimer of A, B and C subunits.

It catalyses the reaction L-glutamyl-tRNA(Gln) + L-glutamine + ATP + H2O = L-glutaminyl-tRNA(Gln) + L-glutamate + ADP + phosphate + H(+). Functionally, allows the formation of correctly charged Gln-tRNA(Gln) through the transamidation of misacylated Glu-tRNA(Gln) in organisms which lack glutaminyl-tRNA synthetase. The reaction takes place in the presence of glutamine and ATP through an activated gamma-phospho-Glu-tRNA(Gln). This is Glutamyl-tRNA(Gln) amidotransferase subunit A from Thermodesulfovibrio yellowstonii (strain ATCC 51303 / DSM 11347 / YP87).